A 148-amino-acid polypeptide reads, in one-letter code: UPF0260 protein YPK_2117 (148 aa).

It belongs to the UPF0260 family.

This is UPF0260 protein YPK_2117 from Yersinia pseudotuberculosis serotype O:3 (strain YPIII).